We begin with the raw amino-acid sequence, 122 residues long: Small ribosomal subunit protein uS13 (122 aa).

The interval 99–122 (RGQRTHTNARTRKGPAKAIAGKKK) is disordered.

It belongs to the universal ribosomal protein uS13 family. Part of the 30S ribosomal subunit. Forms a loose heterodimer with protein S19. Forms two bridges to the 50S subunit in the 70S ribosome.

In terms of biological role, located at the top of the head of the 30S subunit, it contacts several helices of the 16S rRNA. In the 70S ribosome it contacts the 23S rRNA (bridge B1a) and protein L5 of the 50S subunit (bridge B1b), connecting the 2 subunits; these bridges are implicated in subunit movement. Contacts the tRNAs in the A and P-sites. The sequence is that of Small ribosomal subunit protein uS13 from Rhodopseudomonas palustris (strain HaA2).